The primary structure comprises 158 residues: Cyclic pyranopterin monophosphate synthase (158 aa).

Residues 74–76 (MCH) and 112–113 (ME) contribute to the substrate site. Residue aspartate 127 is part of the active site.

It belongs to the MoaC family. As to quaternary structure, homohexamer; trimer of dimers.

It catalyses the reaction (8S)-3',8-cyclo-7,8-dihydroguanosine 5'-triphosphate = cyclic pyranopterin phosphate + diphosphate. Its pathway is cofactor biosynthesis; molybdopterin biosynthesis. Catalyzes the conversion of (8S)-3',8-cyclo-7,8-dihydroguanosine 5'-triphosphate to cyclic pyranopterin monophosphate (cPMP). This Helicobacter pylori (strain G27) protein is Cyclic pyranopterin monophosphate synthase.